Consider the following 37-residue polypeptide: Toxin Bcg III 28.78 (37 aa).

Cysteine 6 and cysteine 31 are joined by a disulfide.

The protein localises to the secreted. Its subcellular location is the nematocyst. The sequence is that of Toxin Bcg III 28.78 from Bunodosoma cangicum (Sea anemone).